A 412-amino-acid polypeptide reads, in one-letter code: MDELLLQDPEVGKAIILEIERQTGKLELIASENFVSAAVRQAQGSVLTHKYAEGYPGKRYYGGCEFVDIAENIAIERARTIFGCEYANVQPHSGSQANMGVYFACLKPGDTILGMNLSHGGHLTHGSPVNFSGRLFNVVFYGVEKETGRIDYEQVAALAREHKPSLIVAGASAYPRTIDFARFRAIADEVGAKLMVDMAHIAGLVAAGYHPSPVQHAHYTTTTTHKTLRGPRGGMILSTEDNGKTLNSQIFPGIQGGPLMHVIAAKAVAFGEALRPAFKEYQKQVVDNAAALAGVLTAAGFDLVSGGTDNHLMLVDLTSKDVTGKDAEIALDKAGITVNKNTVPFETRSPFVTSGVRLGTPALTTRGMKAAEMEKVGGWIVDAIANTTNETRLAEISREVERFARQFPLFAW.

(6S)-5,6,7,8-tetrahydrofolate-binding positions include leucine 117 and 121 to 123; that span reads GHL. An N6-(pyridoxal phosphate)lysine modification is found at lysine 226. Position 349 to 351 (349 to 351) interacts with (6S)-5,6,7,8-tetrahydrofolate; that stretch reads SPF.

It belongs to the SHMT family. As to quaternary structure, homodimer. Pyridoxal 5'-phosphate is required as a cofactor.

It is found in the cytoplasm. The catalysed reaction is (6R)-5,10-methylene-5,6,7,8-tetrahydrofolate + glycine + H2O = (6S)-5,6,7,8-tetrahydrofolate + L-serine. It functions in the pathway one-carbon metabolism; tetrahydrofolate interconversion. The protein operates within amino-acid biosynthesis; glycine biosynthesis; glycine from L-serine: step 1/1. Functionally, catalyzes the reversible interconversion of serine and glycine with tetrahydrofolate (THF) serving as the one-carbon carrier. This reaction serves as the major source of one-carbon groups required for the biosynthesis of purines, thymidylate, methionine, and other important biomolecules. Also exhibits THF-independent aldolase activity toward beta-hydroxyamino acids, producing glycine and aldehydes, via a retro-aldol mechanism. This chain is Serine hydroxymethyltransferase, found in Nitratidesulfovibrio vulgaris (strain ATCC 29579 / DSM 644 / CCUG 34227 / NCIMB 8303 / VKM B-1760 / Hildenborough) (Desulfovibrio vulgaris).